The sequence spans 438 residues: sn-glycerol-3-phosphate-binding periplasmic protein UgpB (438 aa).

A signal peptide spans 1-23; the sequence is MISLRHTALGLALSLAFTGQALA. Sn-glycerol 3-phosphate-binding residues include Tyr65, Glu89, Ser144, Ser270, Gly307, Tyr346, and Arg397.

It belongs to the bacterial solute-binding protein 1 family. The complex is composed of two ATP-binding proteins (UgpC), two transmembrane proteins (UgpA and UgpE) and a solute-binding protein (UgpB).

Its subcellular location is the periplasm. Its function is as follows. Part of the ABC transporter complex UgpBAEC involved in sn-glycerol-3-phosphate (G3P) import. Binds G3P. This Salmonella typhi protein is sn-glycerol-3-phosphate-binding periplasmic protein UgpB (ugpB).